The sequence spans 519 residues: Galactokinase (519 aa).

Alpha-D-galactose is bound by residues Arg-47, Glu-53, His-54, and Asp-56. ATP contacts are provided by Gly-159, Gly-161, Ser-163, and Ser-164. Asp-209 lines the alpha-D-galactose pocket. The active-site Proton acceptor is Asp-209. The ATP site is built by Asn-257 and Lys-258. Residue Tyr-266 participates in alpha-D-galactose binding.

It belongs to the GHMP kinase family. GalK subfamily.

It carries out the reaction alpha-D-galactose + ATP = alpha-D-galactose 1-phosphate + ADP + H(+). Its pathway is carbohydrate metabolism; galactose metabolism. Its function is as follows. Galactokinase is a key enzyme in the galactose metabolism where it catalyzes the conversion of alpha-D-galactose to galactose 1-phosphate. Can also induce the transcription of the gal genes in response to the organism being challenged with galactose as the sole source of carbon. The chain is Galactokinase (gal1) from Schizosaccharomyces pombe (strain 972 / ATCC 24843) (Fission yeast).